The chain runs to 517 residues: MKRWTNLGFVDTIYEDEDYVDHHSSSLSSSSSSLSLSPKQPINLSSSPSMELESRVHKWSLANNSKPDVFVNVGGTRFHLHKDPLSKSGYLKRHLTGVNELTLSPPLNITAETFSLVAGFCYGAHIELTPSNVVSLRIAVEVLLITEADDGGRVRDSLRNLTESYLRRVVFVNVDYIQIVLRSCLLLLPESETTAFLIGRCVEALMEIGDGDCVNEFLEEAVKLPAGDFNVVADAVQQRFPRHDLLYRIVDAYVKEHDGEMTEEEKVQICNSIDCDKLSPPLLLHAVQNPKMPLRFIVRAMLQEQLNTRHSIMVAAVAASCAAPTGVRHREIATEARDSSVTLGSLLQRDTAARQNCRLRAAMNSTSSRIESLEKELDTMKRFLSKESEKQKSDRNIVESRSRSVMDSARSASFHCVHQPSNVNKTQRGDRGSVSNLSTTYRRRRASPPQAQPQKSIGKRLIMGIKNAFSTSSKQVPKKNAYAVEEIYDGLEDFVWIKDDNDDNISEELHSHYIKNK.

Positions 28–37 (SSSSSSLSLS) are enriched in low complexity. The tract at residues 28–49 (SSSSSSLSLSPKQPINLSSSPS) is disordered. Positions 38–49 (PKQPINLSSSPS) are enriched in polar residues. In terms of domain architecture, BTB spans 67–130 (PDVFVNVGGT…CYGAHIELTP (64 aa)). An NPH3 domain is found at 224 to 307 (LPAGDFNVVA…VRAMLQEQLN (84 aa)). The tract at residues 409 to 456 (ARSASFHCVHQPSNVNKTQRGDRGSVSNLSTTYRRRRASPPQAQPQKS) is disordered.

This sequence belongs to the NPH3 family.

Its pathway is protein modification; protein ubiquitination. In terms of biological role, may act as a substrate-specific adapter of an E3 ubiquitin-protein ligase complex (CUL3-RBX1-BTB) which mediates the ubiquitination and subsequent proteasomal degradation of target proteins. This is BTB/POZ domain-containing protein At3g49900 from Arabidopsis thaliana (Mouse-ear cress).